Here is a 223-residue protein sequence, read N- to C-terminus: Probable 3-beta-hydroxysteroid-Delta(8),Delta(7)-isomerase (223 aa).

The next 4 helical transmembrane spans lie at 28 to 48, 58 to 78, 115 to 135, and 175 to 195; these read IVSI…LLFG, LMCW…YFVF, VEGI…YAIA, and FYYY…PSLI. Residues 54 to 196 form the EXPERA domain; that stretch reads LDKLLMCWWT…WWVLIPSLIS (143 aa).

Belongs to the EBP family.

It is found in the endoplasmic reticulum membrane. It catalyses the reaction lathosterol = 5alpha-cholest-8-en-3beta-ol. It functions in the pathway steroid biosynthesis; sterol biosynthesis. Functionally, catalyzes the conversion of Delta(8)-sterols to their corresponding Delta(7)-isomers. The chain is Probable 3-beta-hydroxysteroid-Delta(8),Delta(7)-isomerase from Arabidopsis thaliana (Mouse-ear cress).